Consider the following 326-residue polypeptide: DNA-directed RNA polymerase subunit alpha (326 aa).

Residues 1-231 (MQTNLLKPKI…DQLVVFAALE (231 aa)) are alpha N-terminal domain (alpha-NTD). Residues 247–326 (VDPMLMRPVD…ESWPPANLEK (80 aa)) are alpha C-terminal domain (alpha-CTD).

This sequence belongs to the RNA polymerase alpha chain family. In terms of assembly, homodimer. The RNAP catalytic core consists of 2 alpha, 1 beta, 1 beta' and 1 omega subunit. When a sigma factor is associated with the core the holoenzyme is formed, which can initiate transcription.

The catalysed reaction is RNA(n) + a ribonucleoside 5'-triphosphate = RNA(n+1) + diphosphate. Its function is as follows. DNA-dependent RNA polymerase catalyzes the transcription of DNA into RNA using the four ribonucleoside triphosphates as substrates. The sequence is that of DNA-directed RNA polymerase subunit alpha from Polynucleobacter necessarius subsp. necessarius (strain STIR1).